A 91-amino-acid chain; its full sequence is Acylphosphatase (91 aa).

In terms of domain architecture, Acylphosphatase-like spans 3–90 (QYRIIVDGRV…EGHHRFSIVY (88 aa)). Active-site residues include R18 and N36.

Belongs to the acylphosphatase family.

The enzyme catalyses an acyl phosphate + H2O = a carboxylate + phosphate + H(+). The chain is Acylphosphatase (acyP) from Bacillus subtilis (strain 168).